The following is a 166-amino-acid chain: uncharacterized protein (166 aa).

The may interact with smn1 stretch occupies residues 1–58; that stretch reads MSSEITEGDLQKFHDEHFNAKAVNLWNVAFAQNDRGGNSESANVEYTQSVERYPDGTI.

As to quaternary structure, part of the core SMN complex at least composed of smn1, yip11/gem2, gem6, gem7 and gem8. Interacts with smn1; the interaction is direct. Interacts with gem7; the interaction is direct.

The protein localises to the cytoplasm. It localises to the nucleus. Its function is as follows. The SMN complex catalyzes the assembly of small nuclear ribonucleoproteins (snRNPs), the building blocks of the spliceosome, and thereby plays an important role in the splicing of cellular pre-mRNAs. Most spliceosomal snRNPs contain a common set of Sm proteins SNRPB, SNRPD1, SNRPD2, SNRPD3, SNRPE, SNRPF and SNRPG that assemble in a heptameric protein ring on the Sm site of the small nuclear RNA to form the core snRNP (Sm core). In the cytosol, the Sm proteins SNRPD1, SNRPD2, SNRPE, SNRPF and SNRPG are trapped in an inactive 6S pICln-Sm complex by the chaperone CLNS1A that controls the assembly of the core snRNP. To assemble core snRNPs, the SMN complex accepts the trapped 5Sm proteins from CLNS1A forming an intermediate. Binding of snRNA inside 5Sm triggers eviction of the SMN complex, thereby allowing binding of SNRPD3 and SNRPB to complete assembly of the core snRNP. This is an uncharacterized protein from Schizosaccharomyces pombe (strain 972 / ATCC 24843) (Fission yeast).